The following is a 762-amino-acid chain: Protein PHTF1 (762 aa).

Residues 6-150 (RDAISWYQKK…VHCQIVSTQI (145 aa)) form the PHTF domain. Transmembrane regions (helical) follow at residues 77 to 97 (GLVR…VTSL), 99 to 119 (IFVW…LYLM), and 121 to 141 (PIVN…MGTV). The segment at 152 to 184 (RPSGNNGNRRRRKLRKTVNGDGSRENGNNSSDK) is disordered. N-linked (GlcNAc...) asparagine glycosylation is found at Asn179 and Asn180. Phosphoserine occurs at positions 272, 276, 277, 334, and 336. 2 disordered regions span residues 344–380 (SAAF…ETED) and 393–415 (RSSV…TKRD). Residues 348–361 (SQGSRSGVSGGSRS) are compositionally biased toward low complexity. Residue Asn363 is glycosylated (N-linked (GlcNAc...) asparagine). Over residues 365–376 (SRRDSESTRHDS) the composition is skewed to basic and acidic residues. The N-linked (GlcNAc...) asparagine glycan is linked to Asn431. 4 helical membrane-spanning segments follow: residues 473–493 (GVGY…FPFL), 512–532 (EILT…LSII), 611–631 (VVVS…CAQV), and 645–665 (WEFL…ASLG). Residues Asn674 and Asn733 are each glycosylated (N-linked (GlcNAc...) asparagine). The chain crosses the membrane as a helical span at residues 737 to 757 (VVILSAVSGVISDLLGFNIRL).

Interacts with FEM1B. As to expression, widely expressed with highest levels in testis.

It is found in the endoplasmic reticulum membrane. Its subcellular location is the golgi apparatus. The protein localises to the cis-Golgi network membrane. This chain is Protein PHTF1, found in Homo sapiens (Human).